The chain runs to 158 residues: MNRICHIEIDQASPIPPTAEIEQERQVAIFDLLEENSFALPPREGKPPVEGPFRLTLAIREGRLVFDIRSQEDEKVGEFHLSLGPFRQVVKDYFQICESYFEAVKRLPPSQIEAIDMARRGIHNEGARVLKERLEGKAEVDIDTARRLFTLICVLHWG.

It belongs to the UPF0262 family.

This chain is UPF0262 protein Rsph17025_0594, found in Cereibacter sphaeroides (strain ATCC 17025 / ATH 2.4.3) (Rhodobacter sphaeroides).